We begin with the raw amino-acid sequence, 196 residues long: Putative 3-methyladenine DNA glycosylase (196 aa).

The protein belongs to the DNA glycosylase MPG family.

The sequence is that of Putative 3-methyladenine DNA glycosylase from Chlamydia pneumoniae (Chlamydophila pneumoniae).